Consider the following 78-residue polypeptide: Probable two-component-system connector protein YcgZ (78 aa).

Functionally, probably a connector protein for RcsB/C regulation of biofilm formation, providing additional signal input into the two-component signaling pathway. Partially antagonizes the activities of YmgA and AriR, proteins that, via the Rcs phosphorelay, promote the synthesis of colanic acid, an exopolysaccharide and matrix component. In Escherichia coli (strain K12), this protein is Probable two-component-system connector protein YcgZ (ycgZ).